The following is a 982-amino-acid chain: Bifunctional glutamine synthetase adenylyltransferase/adenylyl-removing enzyme (982 aa).

The segment at 1–460 (MSLPSLANLP…HFRQVIADPD (460 aa)) is adenylyl removase. An adenylyl transferase region spans residues 473-982 (GAEWIPLWEE…IRIWRELRLG (510 aa)).

This sequence belongs to the GlnE family. Requires Mg(2+) as cofactor.

The enzyme catalyses [glutamine synthetase]-O(4)-(5'-adenylyl)-L-tyrosine + phosphate = [glutamine synthetase]-L-tyrosine + ADP. It carries out the reaction [glutamine synthetase]-L-tyrosine + ATP = [glutamine synthetase]-O(4)-(5'-adenylyl)-L-tyrosine + diphosphate. In terms of biological role, involved in the regulation of glutamine synthetase GlnA, a key enzyme in the process to assimilate ammonia. When cellular nitrogen levels are high, the C-terminal adenylyl transferase (AT) inactivates GlnA by covalent transfer of an adenylyl group from ATP to specific tyrosine residue of GlnA, thus reducing its activity. Conversely, when nitrogen levels are low, the N-terminal adenylyl removase (AR) activates GlnA by removing the adenylyl group by phosphorolysis, increasing its activity. The regulatory region of GlnE binds the signal transduction protein PII (GlnB) which indicates the nitrogen status of the cell. This Pseudomonas aeruginosa (strain ATCC 15692 / DSM 22644 / CIP 104116 / JCM 14847 / LMG 12228 / 1C / PRS 101 / PAO1) protein is Bifunctional glutamine synthetase adenylyltransferase/adenylyl-removing enzyme.